The primary structure comprises 164 residues: Transcriptional repressor NrdR (164 aa).

Residues 3-34 fold into a zinc finger; it reads CPKCNYNKSSVVDSRQAEDGNTIRRRRECEKC. Residues 49 to 139 form the ATP-cone domain; sequence LLVVKKDGTR…VYKSFKDVDE (91 aa).

Belongs to the NrdR family. The cofactor is Zn(2+).

Its function is as follows. Negatively regulates transcription of bacterial ribonucleotide reductase nrd genes and operons by binding to NrdR-boxes. The protein is Transcriptional repressor NrdR of Streptococcus uberis (strain ATCC BAA-854 / 0140J).